Consider the following 310-residue polypeptide: NAD kinase 1 (310 aa).

The active-site Proton acceptor is the Asp68. Residues 68-69 (DG), 145-146 (NE), Arg156, His175, and Asp177 each bind NAD(+).

It belongs to the NAD kinase family. A divalent metal cation is required as a cofactor.

Its subcellular location is the cytoplasm. The enzyme catalyses NAD(+) + ATP = ADP + NADP(+) + H(+). Functionally, involved in the regulation of the intracellular balance of NAD and NADP, and is a key enzyme in the biosynthesis of NADP. Catalyzes specifically the phosphorylation on 2'-hydroxyl of the adenosine moiety of NAD to yield NADP. In Gloeobacter violaceus (strain ATCC 29082 / PCC 7421), this protein is NAD kinase 1.